The chain runs to 371 residues: MDFQLQAIDKHARAGLLNLAHSQVATPVFMPVGTQGCIKSLDAMDMQEILGAKLILANTYHMYLRPGEKVVEQLGGLHRFAQFHGSFLTDSGGFQAFSLSGNVKLQEDGIVFKSHIDGSKHFFTPAKVLDIQYSLNSDIMMVLDDLVGLPAPLKRLEESIKRSAKWANLSLEYHKEKNRPNNNLFAIIQGGTHLKMRSLSVELTHKGFDGYAIGGLAVGESVDEMLETIAHTAPLLPKDKPRYLMGVGTPENILDAISLGVDMFDCVMPTRNARNATLFTHSGKISIKNAPYKLDNTPIEENCACYACKRYSKAYLHHLFRAKELTYARLASLHNLHFYLEMVKNARNAILEKRFLSFKKEFLEKYHSCSH.

Asp90 (proton acceptor) is an active-site residue. Substrate-binding positions include 90-94, Asp144, Gln189, and Gly215; that span reads DSGGF. Positions 246–252 are RNA binding; the sequence is GVGTPEN. The active-site Nucleophile is Asp265. The tract at residues 270-274 is RNA binding; important for wobble base 34 recognition; the sequence is TRNAR. Positions 303, 305, 308, and 334 each coordinate Zn(2+).

It belongs to the queuine tRNA-ribosyltransferase family. As to quaternary structure, homodimer. Within each dimer, one monomer is responsible for RNA recognition and catalysis, while the other monomer binds to the replacement base PreQ1. Zn(2+) serves as cofactor.

The catalysed reaction is 7-aminomethyl-7-carbaguanine + guanosine(34) in tRNA = 7-aminomethyl-7-carbaguanosine(34) in tRNA + guanine. It functions in the pathway tRNA modification; tRNA-queuosine biosynthesis. Functionally, catalyzes the base-exchange of a guanine (G) residue with the queuine precursor 7-aminomethyl-7-deazaguanine (PreQ1) at position 34 (anticodon wobble position) in tRNAs with GU(N) anticodons (tRNA-Asp, -Asn, -His and -Tyr). Catalysis occurs through a double-displacement mechanism. The nucleophile active site attacks the C1' of nucleotide 34 to detach the guanine base from the RNA, forming a covalent enzyme-RNA intermediate. The proton acceptor active site deprotonates the incoming PreQ1, allowing a nucleophilic attack on the C1' of the ribose to form the product. After dissociation, two additional enzymatic reactions on the tRNA convert PreQ1 to queuine (Q), resulting in the hypermodified nucleoside queuosine (7-(((4,5-cis-dihydroxy-2-cyclopenten-1-yl)amino)methyl)-7-deazaguanosine). The sequence is that of Queuine tRNA-ribosyltransferase from Helicobacter pylori (strain G27).